Consider the following 423-residue polypeptide: Serine--tRNA ligase (423 aa).

231–233 is an L-serine binding site; sequence TAE. 262-264 is an ATP binding site; the sequence is RSE. Position 285 (Glu-285) interacts with L-serine. 349 to 352 contacts ATP; it reads EISS. L-serine is bound at residue Ser-384.

It belongs to the class-II aminoacyl-tRNA synthetase family. Type-1 seryl-tRNA synthetase subfamily. In terms of assembly, homodimer. The tRNA molecule binds across the dimer.

The protein localises to the cytoplasm. It catalyses the reaction tRNA(Ser) + L-serine + ATP = L-seryl-tRNA(Ser) + AMP + diphosphate + H(+). The catalysed reaction is tRNA(Sec) + L-serine + ATP = L-seryl-tRNA(Sec) + AMP + diphosphate + H(+). The protein operates within aminoacyl-tRNA biosynthesis; selenocysteinyl-tRNA(Sec) biosynthesis; L-seryl-tRNA(Sec) from L-serine and tRNA(Sec): step 1/1. Functionally, catalyzes the attachment of serine to tRNA(Ser). Is also able to aminoacylate tRNA(Sec) with serine, to form the misacylated tRNA L-seryl-tRNA(Sec), which will be further converted into selenocysteinyl-tRNA(Sec). In Lactococcus lactis subsp. cremoris (strain SK11), this protein is Serine--tRNA ligase.